Here is a 152-residue protein sequence, read N- to C-terminus: D-aminoacyl-tRNA deacylase (152 aa).

A Gly-cisPro motif, important for rejection of L-amino acids motif is present at residues glycine 137–proline 138.

This sequence belongs to the DTD family. As to quaternary structure, homodimer.

The protein resides in the cytoplasm. It catalyses the reaction glycyl-tRNA(Ala) + H2O = tRNA(Ala) + glycine + H(+). The catalysed reaction is a D-aminoacyl-tRNA + H2O = a tRNA + a D-alpha-amino acid + H(+). An aminoacyl-tRNA editing enzyme that deacylates mischarged D-aminoacyl-tRNAs. Also deacylates mischarged glycyl-tRNA(Ala), protecting cells against glycine mischarging by AlaRS. Acts via tRNA-based rather than protein-based catalysis; rejects L-amino acids rather than detecting D-amino acids in the active site. By recycling D-aminoacyl-tRNA to D-amino acids and free tRNA molecules, this enzyme counteracts the toxicity associated with the formation of D-aminoacyl-tRNA entities in vivo and helps enforce protein L-homochirality. The chain is D-aminoacyl-tRNA deacylase from Geobacter sulfurreducens (strain ATCC 51573 / DSM 12127 / PCA).